Consider the following 434-residue polypeptide: APETALA2-like protein 2 (434 aa).

A disordered region spans residues 1–116 (MLLDLNVESP…KTRRGPRSRS (116 aa)). The span at 12–23 (RSGTSSSSVLNS) shows a compositional bias: low complexity. A compositionally biased stretch (gly residues) spans 25–38 (DAGGGGGGGGGGGL). Residues 72–87 (LPPPPPAAPSPAPAWQ) are compositionally biased toward pro residues. Positions 104–113 (VAKKTRRGPR) are enriched in basic residues. The Nuclear localization signal motif lies at 106-115 (KKTRRGPRSR). 2 consecutive DNA-binding regions (AP2/ERF) follow at residues 118–174 (QYRG…INFN) and 210–267 (KFRG…TNFE). An EAR motif is present at residues 291-295 (LDLRI).

The protein belongs to the AP2/ERF transcription factor family. AP2 subfamily. As to quaternary structure, may form homodimer. Interacts with TPR2/ASP1.

Its subcellular location is the nucleus. Probable transcription factor. Involved in spikelet transition. Together with SNB, controls synergistically inflorescence architecture and floral meristem establishment via the regulation of spatio-temporal expression of B- and E-function floral organ identity genes in the lodicules and of spikelet meristem genes. Prevents lemma and palea elongation as well as grain growth. In Oryza sativa subsp. indica (Rice), this protein is APETALA2-like protein 2.